The sequence spans 34 residues: Surfactant protein C (34 aa).

Cys4 is lipidated: S-palmitoyl cysteine.

Its subcellular location is the secreted. It localises to the extracellular space. It is found in the surface film. Its function is as follows. Pulmonary surfactant associated proteins promote alveolar stability by lowering the surface tension at the air-liquid interface in the peripheral air spaces. The sequence is that of Surfactant protein C (SFTPC) from Canis lupus familiaris (Dog).